The chain runs to 279 residues: Undecaprenyl-diphosphatase (279 aa).

Helical transmembrane passes span L2–L22, A44–I64, W85–L105, F113–I133, V163–L183, T188–L208, A223–I243, and F255–F275.

The protein belongs to the UppP family.

Its subcellular location is the cell membrane. It catalyses the reaction di-trans,octa-cis-undecaprenyl diphosphate + H2O = di-trans,octa-cis-undecaprenyl phosphate + phosphate + H(+). Catalyzes the dephosphorylation of undecaprenyl diphosphate (UPP). Confers resistance to bacitracin. This Streptococcus pyogenes serotype M5 (strain Manfredo) protein is Undecaprenyl-diphosphatase.